Here is a 402-residue protein sequence, read N- to C-terminus: CCA-adding enzyme (402 aa).

ATP is bound by residues Gly-32 and Arg-35. CTP contacts are provided by Gly-32 and Arg-35. Mg(2+) contacts are provided by Asp-45 and Asp-47. ATP is bound by residues Arg-116, Asp-159, Arg-162, Arg-165, and Arg-168. CTP-binding residues include Arg-116, Asp-159, Arg-162, Arg-165, and Arg-168.

It belongs to the tRNA nucleotidyltransferase/poly(A) polymerase family. Bacterial CCA-adding enzyme type 3 subfamily. In terms of assembly, homodimer. The cofactor is Mg(2+).

It carries out the reaction a tRNA precursor + 2 CTP + ATP = a tRNA with a 3' CCA end + 3 diphosphate. The catalysed reaction is a tRNA with a 3' CCA end + 2 CTP + ATP = a tRNA with a 3' CCACCA end + 3 diphosphate. Functionally, catalyzes the addition and repair of the essential 3'-terminal CCA sequence in tRNAs without using a nucleic acid template. Adds these three nucleotides in the order of C, C, and A to the tRNA nucleotide-73, using CTP and ATP as substrates and producing inorganic pyrophosphate. tRNA 3'-terminal CCA addition is required both for tRNA processing and repair. Also involved in tRNA surveillance by mediating tandem CCA addition to generate a CCACCA at the 3' terminus of unstable tRNAs. While stable tRNAs receive only 3'-terminal CCA, unstable tRNAs are marked with CCACCA and rapidly degraded. This Streptococcus thermophilus (strain CNRZ 1066) protein is CCA-adding enzyme.